A 287-amino-acid chain; its full sequence is Pyridoxal kinase PdxY (287 aa).

Substrate contacts are provided by residues Ser-10 and 45-46 (TQ). Residues Asp-112, Ala-144, Glu-149, Lys-182, and 209-212 (RPLV) each bind ATP. Asp-224 is a substrate binding site.

It belongs to the pyridoxine kinase family. PdxY subfamily. In terms of assembly, homodimer. Mg(2+) is required as a cofactor.

It catalyses the reaction pyridoxal + ATP = pyridoxal 5'-phosphate + ADP + H(+). Its pathway is cofactor metabolism; pyridoxal 5'-phosphate salvage; pyridoxal 5'-phosphate from pyridoxal: step 1/1. Functionally, pyridoxal kinase involved in the salvage pathway of pyridoxal 5'-phosphate (PLP). Catalyzes the phosphorylation of pyridoxal to PLP. This chain is Pyridoxal kinase PdxY, found in Shigella boydii serotype 4 (strain Sb227).